Reading from the N-terminus, the 471-residue chain is Adenosylhomocysteinase (471 aa).

Residues threonine 60, aspartate 135, and glutamate 196 each contribute to the substrate site. NAD(+) is bound at residue 197–199 (TTT). Substrate-binding residues include lysine 226 and aspartate 230. NAD(+)-binding positions include asparagine 231, 260-265 (GYGDVG), glutamate 283, asparagine 318, 339-341 (IGH), and asparagine 387.

The protein belongs to the adenosylhomocysteinase family. NAD(+) is required as a cofactor.

The protein localises to the cytoplasm. The catalysed reaction is S-adenosyl-L-homocysteine + H2O = L-homocysteine + adenosine. It participates in amino-acid biosynthesis; L-homocysteine biosynthesis; L-homocysteine from S-adenosyl-L-homocysteine: step 1/1. Functionally, may play a key role in the regulation of the intracellular concentration of adenosylhomocysteine. This is Adenosylhomocysteinase from Chlorobaculum tepidum (strain ATCC 49652 / DSM 12025 / NBRC 103806 / TLS) (Chlorobium tepidum).